Here is a 170-residue protein sequence, read N- to C-terminus: Cathelicidin antimicrobial peptide (170 aa).

Residues 1 to 30 (MKTQRDGHSLGWWSLVLLLLGLVMPLAIIA) form the signal peptide. Residues 31 to 131 (QVLSYKEAVL…DISCDKDNKR (101 aa)) constitute a propeptide, cathelin-like domain (CLD). Cystine bridges form between C86–C97 and C108–C125. Residues 150–162 (SKRIVQRIKDFLR) form an active core region.

Belongs to the cathelicidin family. In terms of assembly, monomer, homodimer or homotrimer (in vitro). Oligomerizes as tetra- or hexamer in solution (in vitro). Proteolytically cleaved by proteinase PRTN3 into antibacterial peptide LL-37. Proteolytically cleaved by cathepsin CTSG and neutrophil elastase ELANE. In terms of processing, resistant to proteolytic degradation in solution, and when bound to both zwitterionic (mimicking mammalian membranes) and negatively charged membranes (mimicking bacterial membranes). Post-translationally, after secretion onto the skin surface, the CAMP gene product is processed by a serine protease-dependent mechanism into multiple novel antimicrobial peptides distinct from and shorter than cathelicidin LL-37. These peptides show enhanced antimicrobial action, acquiring the ability to kill skin pathogens such as S.aureus, E.coli and C.albicans. These peptides have lost the ability to stimulate CXCL8/IL8 release from keratinocytes. The peptides act synergistically, killing bacteria at lower concentrations when present together, and maintain activity at increased salt condition.

The protein localises to the secreted. It is found in the vesicle. In terms of biological role, antimicrobial protein that is an integral component of the innate immune system. Binds to bacterial lipopolysaccharides (LPS). Acts via neutrophil N-formyl peptide receptors to enhance the release of CXCL2. Postsecretory processing generates multiple cathelicidin antimicrobial peptides with various lengths which act as a topical antimicrobial defense in sweat on skin. The unprocessed precursor form, cathelicidin antimicrobial peptide, inhibits the growth of Gram-negative E.coli and E.aerogenes with efficiencies comparable to that of the mature peptide LL-37 (in vitro). Its function is as follows. Antimicrobial peptide that is an integral component of the innate immune system. Binds to bacterial lipopolysaccharides (LPS). Causes membrane permeabilization by forming transmembrane pores (in vitro). Causes lysis of E.coli. Exhibits antimicrobial activity against Gram-negative bacteria such as P.aeruginosa, S.typhimurium, E.aerogenes, E.coli and P.syringae, Gram-positive bacteria such as L.monocytogenes, S.epidermidis, S.pyogenes and S.aureus, as well as vancomycin-resistant enterococci (in vitro). Exhibits antimicrobial activity against methicillin-resistant S.aureus, P.mirabilis, and C.albicans in low-salt media, but not in media containing 100 mM NaCl (in vitro). Forms chiral supramolecular assemblies with quinolone signal (PQS) molecules of P.aeruginosa, which may lead to interference of bacterial quorum signaling and perturbance of bacterial biofilm formation. May form supramolecular fiber-like assemblies on bacterial membranes. Induces cytokine and chemokine producation as well as TNF/TNFA and CSF2/GMCSF production in normal human keratinocytes. Exhibits hemolytic activity against red blood cells. Functionally, exhibits antimicrobial activity against E.coli and B.megaterium (in vitro). The sequence is that of Cathelicidin antimicrobial peptide from Gorilla gorilla gorilla (Western lowland gorilla).